Consider the following 104-residue polypeptide: Ubiquitin-related modifier 1 homolog (104 aa).

Gly104 carries the 1-thioglycine modification. Residue Gly104 forms a Glycyl lysine isopeptide (Gly-Lys) (interchain with K-? in acceptor proteins) linkage.

The protein belongs to the URM1 family. As to quaternary structure, interacts with cer. Post-translationally, C-terminal thiocarboxylation occurs in 2 steps, it is first acyl-adenylated (-COAMP) via the hesA/moeB/thiF part of the MOCS3 homolog, then thiocarboxylated (-COSH) via the rhodanese domain of the MOCS3 homolog.

The protein localises to the cytoplasm. It functions in the pathway tRNA modification; 5-methoxycarbonylmethyl-2-thiouridine-tRNA biosynthesis. Functionally, acts as a sulfur carrier required for 2-thiolation of mcm(5)S(2)U at tRNA wobble positions of cytosolic tRNA(Lys), tRNA(Glu) and tRNA(Gln). Serves as sulfur donor in tRNA 2-thiolation reaction by being thiocarboxylated (-COSH) at its C-terminus by MOCS3. The sulfur is then transferred to tRNA to form 2-thiolation of mcm(5)S(2)U. Also acts as a ubiquitin-like protein (UBL) that is covalently conjugated via an isopeptide bond to lysine residues of target proteins such as Prx2/Jafrac1, Ciao1, Eip71CD and GILT1. The thiocarboxylated form serves as substrate for conjugation and oxidative stress specifically induces the formation of UBL-protein conjugates. The protein is Ubiquitin-related modifier 1 homolog of Drosophila grimshawi (Hawaiian fruit fly).